The chain runs to 248 residues: Pyridoxine 5'-phosphate synthase (248 aa).

N7 provides a ligand contact to 3-amino-2-oxopropyl phosphate. 9 to 10 (DH) is a binding site for 1-deoxy-D-xylulose 5-phosphate. Residue R18 participates in 3-amino-2-oxopropyl phosphate binding. The active-site Proton acceptor is H52. 2 residues coordinate 1-deoxy-D-xylulose 5-phosphate: R54 and H59. The active-site Proton acceptor is E79. Residue T109 coordinates 1-deoxy-D-xylulose 5-phosphate. The Proton donor role is filled by H201. Residues G202 and 223–224 (GH) contribute to the 3-amino-2-oxopropyl phosphate site.

This sequence belongs to the PNP synthase family. As to quaternary structure, homooctamer; tetramer of dimers.

Its subcellular location is the cytoplasm. The catalysed reaction is 3-amino-2-oxopropyl phosphate + 1-deoxy-D-xylulose 5-phosphate = pyridoxine 5'-phosphate + phosphate + 2 H2O + H(+). Its pathway is cofactor biosynthesis; pyridoxine 5'-phosphate biosynthesis; pyridoxine 5'-phosphate from D-erythrose 4-phosphate: step 5/5. Catalyzes the complicated ring closure reaction between the two acyclic compounds 1-deoxy-D-xylulose-5-phosphate (DXP) and 3-amino-2-oxopropyl phosphate (1-amino-acetone-3-phosphate or AAP) to form pyridoxine 5'-phosphate (PNP) and inorganic phosphate. This Opitutus terrae (strain DSM 11246 / JCM 15787 / PB90-1) protein is Pyridoxine 5'-phosphate synthase.